Consider the following 125-residue polypeptide: Subtelomeric hrmA-associated cluster protein cgnA (125 aa).

23 G-Q-I/R/S repeats span residues 11-13 (GQI), 14-16 (GPI), 17-19 (GQR), 20-22 (GQS), 23-25 (GQR), 26-28 (GQS), 29-31 (GQR), 32-34 (GQS), 35-37 (GQI), 38-40 (GQS), 41-43 (GQS), 44-46 (GQS), 47-49 (GQS), 50-52 (GQS), 53-55 (GQI), 56-58 (GQI), 59-61 (GQI), 62-64 (GQI), 65-67 (GQI), 68-70 (GQI), 71-73 (GQI), 74-76 (GQI), and 77-79 (GQA). The tract at residues 11–79 (GQIGPIGQRG…IGQIGQIGQA (69 aa)) is 23 X 3 AA approximate tandem repeats of G-Q-I/R/S. Positions 15–57 (PIGQRGQSGQRGQSGQRGQSGQIGQSGQSGQSGQSGQSGQIGQ) are disordered.

It is found in the secreted. Its function is as follows. Hypoxia responsive morphology factor that modulates the expression of the subtelomeric hrmA-associated cluster (HAC) containing genes that alter the hyphal surface (such as reduced total chitin or increased beta-glucan exposure) and perturb inter-hyphal interactions within the developing biofilms, resulting in a loss of vertically aligned polarized growing filaments. Consequently, this hypoxia-typic morphotype (called H-MORPH) with altered biofilm architecture leads to increased hypoxia fitness, increased host inflammation, rapid disease progression, and mortality in a murine model of invasive aspergillosis. GcnA is directly involved in the reduction total surface chitin and the increase beta-glucan exposure, and mediates the detachment of the extracellular matrix and especially of its component galactosaminogalactan (GAG). The chain is Subtelomeric hrmA-associated cluster protein cgnA from Aspergillus fumigatus (strain CBS 144.89 / FGSC A1163 / CEA10) (Neosartorya fumigata).